A 114-amino-acid chain; its full sequence is Putative movement protein (114 aa).

Residues 27-47 traverse the membrane as a helical segment; that stretch reads LIGIILLVTVCLTVLWVCIML. Positions 79-114 are disordered; that stretch reads RTPFEATGPERERNWEARRQSTTVNPASQPNTGSVF. Basic and acidic residues predominate over residues 86 to 97; the sequence is GPERERNWEARR. Residues 98-114 show a composition bias toward polar residues; that stretch reads QSTTVNPASQPNTGSVF.

Belongs to the nanovirus movement protein family.

It localises to the host cell membrane. May transport viral genome to neighboring plant cells directly through plasmosdesmata, without any budding. The movement protein allows efficient cell to cell propagation, by bypassing the host cell wall barrier. This Faba bean necrotic yellows virus (isolate Egyptian EV1-93) (FBNYV) protein is Putative movement protein (DNA-M).